We begin with the raw amino-acid sequence, 147 residues long: Large ribosomal subunit protein uL15 (147 aa).

The segment at 1 to 42 (MTIKVHHLRPAPGAKTTKTRVGRGEGSKGKTAGRGTKGSKAR) is disordered.

It belongs to the universal ribosomal protein uL15 family. As to quaternary structure, part of the 50S ribosomal subunit.

Its function is as follows. Binds to the 23S rRNA. The protein is Large ribosomal subunit protein uL15 of Salinispora tropica (strain ATCC BAA-916 / DSM 44818 / JCM 13857 / NBRC 105044 / CNB-440).